Here is a 220-residue protein sequence, read N- to C-terminus: 7-cyano-7-deazaguanine synthase (220 aa).

10–20 (FSGGQDSTTCL) contributes to the ATP binding site. 4 residues coordinate Zn(2+): cysteine 186, cysteine 195, cysteine 198, and cysteine 201.

This sequence belongs to the QueC family. In terms of assembly, homodimer. Zn(2+) is required as a cofactor.

It carries out the reaction 7-carboxy-7-deazaguanine + NH4(+) + ATP = 7-cyano-7-deazaguanine + ADP + phosphate + H2O + H(+). It functions in the pathway purine metabolism; 7-cyano-7-deazaguanine biosynthesis. In terms of biological role, catalyzes the ATP-dependent conversion of 7-carboxy-7-deazaguanine (CDG) to 7-cyano-7-deazaguanine (preQ(0)). The protein is 7-cyano-7-deazaguanine synthase of Bacillus anthracis (strain A0248).